The chain runs to 133 residues: Small ribosomal subunit protein eS8 (133 aa).

The segment at 1–22 (MGFYQGPDNRKITGGLKGKHRD) is disordered.

The protein belongs to the eukaryotic ribosomal protein eS8 family. As to quaternary structure, part of the 30S ribosomal subunit.

In Saccharolobus islandicus (strain M.14.25 / Kamchatka #1) (Sulfolobus islandicus), this protein is Small ribosomal subunit protein eS8.